We begin with the raw amino-acid sequence, 472 residues long: Divalent metal cation transporter MntH (472 aa).

A run of 11 helical transmembrane segments spans residues 59–79 (LLAFLGPGYMVSVGYMDPGNW), 92–112 (MLLSVILLSNVMAIVLQALAA), 136–156 (LALWVVCELAIIACDLAEVIG), 167–187 (VPIIWGVVITAVDVVLVLLLM), 196–216 (AFVIALLLVIFGCFVVQIVLA), 233–253 (VVADPQALYLAIGIVGATVMP), 288–308 (LALMLALFINASILILAAAVF), 325–345 (LLAPVLGVGVAATLFATALLA), 377–397 (VLTRGLAIVPVIVVVALYGEQ), 402–422 (LLLLSQVILSMQLPFAVIPLL), and 439–459 (WLMVVAWLIAGVIVVLNVKLL).

The protein belongs to the NRAMP family.

The protein localises to the cell inner membrane. Functionally, h(+)-stimulated, divalent metal cation uptake system. The polypeptide is Divalent metal cation transporter MntH (Xylella fastidiosa (strain 9a5c)).